The chain runs to 227 residues: 7-cyano-7-deazaguanine synthase (227 aa).

Residue 7–17 (VSGGMDSLVAT) coordinates ATP. Positions 187, 195, 198, and 201 each coordinate Zn(2+).

It belongs to the QueC family. Zn(2+) is required as a cofactor.

The catalysed reaction is 7-carboxy-7-deazaguanine + NH4(+) + ATP = 7-cyano-7-deazaguanine + ADP + phosphate + H2O + H(+). It functions in the pathway purine metabolism; 7-cyano-7-deazaguanine biosynthesis. Its function is as follows. Catalyzes the ATP-dependent conversion of 7-carboxy-7-deazaguanine (CDG) to 7-cyano-7-deazaguanine (preQ(0)). This is 7-cyano-7-deazaguanine synthase from Chlorobaculum tepidum (strain ATCC 49652 / DSM 12025 / NBRC 103806 / TLS) (Chlorobium tepidum).